A 130-amino-acid polypeptide reads, in one-letter code: Holo-[acyl-carrier-protein] synthase (130 aa).

Mg(2+) is bound by residues Asp9 and Glu58.

Belongs to the P-Pant transferase superfamily. AcpS family. It depends on Mg(2+) as a cofactor.

It is found in the cytoplasm. It carries out the reaction apo-[ACP] + CoA = holo-[ACP] + adenosine 3',5'-bisphosphate + H(+). Transfers the 4'-phosphopantetheine moiety from coenzyme A to a Ser of acyl-carrier-protein. The protein is Holo-[acyl-carrier-protein] synthase of Mycolicibacterium smegmatis (strain ATCC 700084 / mc(2)155) (Mycobacterium smegmatis).